A 266-amino-acid polypeptide reads, in one-letter code: UPF0354 protein lwe1624 (266 aa).

The protein belongs to the UPF0354 family.

In Listeria welshimeri serovar 6b (strain ATCC 35897 / DSM 20650 / CCUG 15529 / CIP 8149 / NCTC 11857 / SLCC 5334 / V8), this protein is UPF0354 protein lwe1624.